We begin with the raw amino-acid sequence, 510 residues long: NAD(P)H-quinone oxidoreductase subunit 2 A, chloroplastic (510 aa).

14 consecutive transmembrane segments (helical) span residues 31 to 51 (FIFPECILIFGLILLLMIDLT), 59 to 79 (WFYFISSTSLVISITALLFRW), 99 to 119 (IFQFLILLCSTLCIPLSVEYI), 124 to 144 (MAITEFLLFVLTATLGGMFLC), 149 to 169 (LITIFVALECFSLCSYLLSGY), 184 to 204 (LLMGGASSSILVYGFSWLYGL), 229 to 249 (ISIALIFITVGLGFKLSLAPF), 261 to 281 (PTPVVAFLSVTSKVAALALAT), 295 to 315 (WHLLLEILAILSMILGNLLAI), 323 to 343 (MLAYSSIGQIGYVIIGIIVGD), 354 to 374 (YMLFYISMNLGTFACIVLFGL), 395 to 415 (ALSLALCLLSLGGLPPLAGFF), 418 to 438 (LYLFWCGWQAGLYFLVSIGLL), and 484 to 504 (MTVCVIASTILGISMNPILAI).

This sequence belongs to the complex I subunit 2 family. As to quaternary structure, NDH is composed of at least 16 different subunits, 5 of which are encoded in the nucleus.

It localises to the plastid. It is found in the chloroplast thylakoid membrane. It carries out the reaction a plastoquinone + NADH + (n+1) H(+)(in) = a plastoquinol + NAD(+) + n H(+)(out). It catalyses the reaction a plastoquinone + NADPH + (n+1) H(+)(in) = a plastoquinol + NADP(+) + n H(+)(out). Functionally, NDH shuttles electrons from NAD(P)H:plastoquinone, via FMN and iron-sulfur (Fe-S) centers, to quinones in the photosynthetic chain and possibly in a chloroplast respiratory chain. The immediate electron acceptor for the enzyme in this species is believed to be plastoquinone. Couples the redox reaction to proton translocation, and thus conserves the redox energy in a proton gradient. The protein is NAD(P)H-quinone oxidoreductase subunit 2 A, chloroplastic of Oryza sativa subsp. japonica (Rice).